Reading from the N-terminus, the 669-residue chain is Protein real-time (669 aa).

Positions 3–175 (QKFQSPVRVY…FINQLEQEGV (173 aa)) constitute a PRELI/MSF1 domain. Residues 284–460 (EPAVVVEHFP…FLGGPCKTMI (177 aa)) enclose the CRAL-TRIO domain. The GOLD domain maps to 522-641 (HQNLYKSVDL…QLNLFYEVLS (120 aa)).

Its subcellular location is the mitochondrion. The protein is Protein real-time of Drosophila pseudoobscura pseudoobscura (Fruit fly).